We begin with the raw amino-acid sequence, 288 residues long: Quinate/shikimate dehydrogenase (288 aa).

The substrate site is built by Lys-71 and Asp-107. Residues 132–135 (AGGA), 155–158 (NRRD), Lys-205, 232–235 (CVYN), and Gly-255 contribute to the NAD(+) site.

Belongs to the shikimate dehydrogenase family. As to quaternary structure, homodimer.

It carries out the reaction L-quinate + NAD(+) = 3-dehydroquinate + NADH + H(+). The catalysed reaction is L-quinate + NADP(+) = 3-dehydroquinate + NADPH + H(+). It catalyses the reaction shikimate + NADP(+) = 3-dehydroshikimate + NADPH + H(+). The enzyme catalyses shikimate + NAD(+) = 3-dehydroshikimate + NADH + H(+). It participates in metabolic intermediate biosynthesis; chorismate biosynthesis; chorismate from D-erythrose 4-phosphate and phosphoenolpyruvate: step 4/7. The actual biological function of YdiB remains unclear, nor is it known whether 3-dehydroshikimate or quinate represents the natural substrate. Catalyzes the reversible NAD-dependent reduction of both 3-dehydroshikimate (DHSA) and 3-dehydroquinate to yield shikimate (SA) and quinate, respectively. It can use both NAD or NADP for catalysis, however it has higher catalytic efficiency with NAD. The sequence is that of Quinate/shikimate dehydrogenase from Escherichia coli (strain 55989 / EAEC).